We begin with the raw amino-acid sequence, 501 residues long: Aldehyde dehydrogenase 1A1 (501 aa).

Ser-2 is subject to N-acetylserine. 2 positions are modified to N6-acetyllysine: Lys-91 and Lys-128. Residues 167–170 (IPWN), 193–196 (KPAE), 226–227 (GP), and 246–247 (GS) each bind NAD(+). Position 252 is an N6-acetyllysine (Lys-252). Glu-269 functions as the Proton acceptor in the catalytic mechanism. 269–271 (ELG) is a binding site for NAD(+). Catalysis depends on Cys-303, which acts as the Nucleophile. The mediates interaction with PRMT3 stretch occupies residues 336–501 (LTPGINQGPQ…VAMKISQKNS (166 aa)). Thr-337 bears the Phosphothreonine mark. 349–353 (EQHDK) contributes to the NAD(+) binding site. Lys-353 and Lys-367 each carry N6-acetyllysine. NAD(+) is bound at residue 400-402 (EIF). The residue at position 410 (Lys-410) is an N6-acetyllysine. The residue at position 413 (Ser-413) is a Phosphoserine. Residues Lys-419, Lys-435, and Lys-495 each carry the N6-acetyllysine modification.

This sequence belongs to the aldehyde dehydrogenase family. In terms of assembly, homotetramer. Interacts with PRMT3; the interaction is direct, inhibits ALDH1A1 aldehyde dehydrogenase activity and is independent of the methyltransferase activity of PRMT3. In terms of processing, the N-terminus is blocked most probably by acetylation. Expressed in retina. Expressed in lens and cornea (at protein level). Expressed by midbrain dopamine neurons.

Its subcellular location is the cytoplasm. It is found in the cytosol. It localises to the cell projection. The protein resides in the axon. It carries out the reaction an aldehyde + NAD(+) + H2O = a carboxylate + NADH + 2 H(+). The catalysed reaction is all-trans-retinal + NAD(+) + H2O = all-trans-retinoate + NADH + 2 H(+). The enzyme catalyses 9-cis-retinal + NAD(+) + H2O = 9-cis-retinoate + NADH + 2 H(+). It catalyses the reaction 11-cis-retinal + NAD(+) + H2O = 11-cis-retinoate + NADH + 2 H(+). It carries out the reaction 13-cis-retinal + NAD(+) + H2O = 13-cis-retinoate + NADH + 2 H(+). The catalysed reaction is 4-aminobutanal + NAD(+) + H2O = 4-aminobutanoate + NADH + 2 H(+). The enzyme catalyses 3-deoxyglucosone + NAD(+) + H2O = 2-dehydro-3-deoxy-D-gluconate + NADH + 2 H(+). It catalyses the reaction (E)-4-hydroxynon-2-enal + NAD(+) + H2O = (E)-4-hydroxynon-2-enoate + NADH + 2 H(+). It carries out the reaction malonaldehyde + NAD(+) + H2O = 3-oxopropanoate + NADH + 2 H(+). The catalysed reaction is hexanal + NAD(+) + H2O = hexanoate + NADH + 2 H(+). The enzyme catalyses propanal + NAD(+) + H2O = propanoate + NADH + 2 H(+). It catalyses the reaction acetaldehyde + NAD(+) + H2O = acetate + NADH + 2 H(+). It carries out the reaction benzaldehyde + NAD(+) + H2O = benzoate + NADH + 2 H(+). It participates in cofactor metabolism; retinol metabolism. With respect to regulation, the aminobutyraldehyde dehydrogenase activity is negatively regulated by ethanol in vivo. In terms of biological role, cytosolic dehydrogenase that catalyzes the irreversible oxidation of a wide range of aldehydes to their corresponding carboxylic acid. Functions downstream of retinol dehydrogenases and catalyzes the oxidation of retinaldehyde into retinoic acid, the second step in the oxidation of retinol/vitamin A into retinoic acid. This pathway is crucial to control the levels of retinol and retinoic acid, two important molecules which excess can be teratogenic and cytotoxic. Also oxidizes aldehydes resulting from lipid peroxidation like (E)-4-hydroxynon-2-enal/HNE, malonaldehyde and hexanal that form protein adducts and are highly cytotoxic. By participating for instance to the clearance of (E)-4-hydroxynon-2-enal/HNE in the lens epithelium prevents the formation of HNE-protein adducts and lens opacification. Also functions downstream of fructosamine-3-kinase in the fructosamine degradation pathway by catalyzing the oxidation of 3-deoxyglucosone, the carbohydrate product of fructosamine 3-phosphate decomposition, which is itself a potent glycating agent that may react with lysine and arginine side-chains of proteins. Also has an aminobutyraldehyde dehydrogenase activity and is probably part of an alternative pathway for the biosynthesis of GABA/4-aminobutanoate in midbrain, thereby playing a role in GABAergic synaptic transmission. The protein is Aldehyde dehydrogenase 1A1 of Mus musculus (Mouse).